A 77-amino-acid polypeptide reads, in one-letter code: UPF0291 protein RBAM_017680 (77 aa).

Residues 55 to 77 (IDPEGNDVTPEKLKREQQKNNLH) are disordered. Residues 63–77 (TPEKLKREQQKNNLH) are compositionally biased toward basic and acidic residues.

This sequence belongs to the UPF0291 family.

Its subcellular location is the cytoplasm. The chain is UPF0291 protein RBAM_017680 from Bacillus velezensis (strain DSM 23117 / BGSC 10A6 / LMG 26770 / FZB42) (Bacillus amyloliquefaciens subsp. plantarum).